We begin with the raw amino-acid sequence, 174 residues long: CASP-like protein 4D2 (174 aa).

At 1 to 14 (MAPPPPSPPPVSLK) the chain is on the cytoplasmic side. A helical transmembrane segment spans residues 15-35 (VSLLLLRVLTGVFLVIALIIL). Over 36-60 (STNSVTIVSQGSALKFHFKDVYAYR) the chain is Extracellular. Residues 61 to 81 (YMLSAAVIGLLYAVIQLFFTI) traverse the membrane as a helical segment. The Cytoplasmic segment spans residues 82 to 150 (SEFATGMKNP…FFSRGYASAS (69 aa)). The helical transmembrane segment at 151–171 (LLLFSFICLAVLSVFSSLAIA) threads the bilayer. Over 172–174 (KRN) the chain is Extracellular.

It belongs to the Casparian strip membrane proteins (CASP) family. Homodimer and heterodimers.

The protein localises to the cell membrane. This is CASP-like protein 4D2 from Arabidopsis lyrata subsp. lyrata (Lyre-leaved rock-cress).